Here is a 133-residue protein sequence, read N- to C-terminus: MLNLRVIAPNRIVWNSEVREIILSTNNGQMGILPNHAPLLTALDIGVMKIRIDERWSNMALMGGFATIDNNQITILVNEAEKSSEIDPEEAQETFQKAQANLTRAEGKRKTIEAHLAFKRAKARLEAINVTQE.

This sequence belongs to the ATPase epsilon chain family. In terms of assembly, F-type ATPases have 2 components, CF(1) - the catalytic core - and CF(0) - the membrane proton channel. CF(1) has five subunits: alpha(3), beta(3), gamma(1), delta(1), epsilon(1). CF(0) has three main subunits: a, b and c.

Its subcellular location is the plastid. It is found in the chloroplast thylakoid membrane. Produces ATP from ADP in the presence of a proton gradient across the membrane. This Psilotum nudum (Whisk fern) protein is ATP synthase epsilon chain, chloroplastic.